The chain runs to 89 residues: Small ribosomal subunit protein uS14 (89 aa).

This sequence belongs to the universal ribosomal protein uS14 family. Part of the 30S ribosomal subunit. Contacts proteins S3 and S10.

In terms of biological role, binds 16S rRNA, required for the assembly of 30S particles and may also be responsible for determining the conformation of the 16S rRNA at the A site. The sequence is that of Small ribosomal subunit protein uS14 from Exiguobacterium sibiricum (strain DSM 17290 / CCUG 55495 / CIP 109462 / JCM 13490 / 255-15).